A 245-amino-acid polypeptide reads, in one-letter code: Ubiquinone/menaquinone biosynthesis C-methyltransferase UbiE (245 aa).

S-adenosyl-L-methionine contacts are provided by residues threonine 71, aspartate 92, and 118-119; that span reads DA.

The protein belongs to the class I-like SAM-binding methyltransferase superfamily. MenG/UbiE family.

It carries out the reaction a 2-demethylmenaquinol + S-adenosyl-L-methionine = a menaquinol + S-adenosyl-L-homocysteine + H(+). The enzyme catalyses a 2-methoxy-6-(all-trans-polyprenyl)benzene-1,4-diol + S-adenosyl-L-methionine = a 5-methoxy-2-methyl-3-(all-trans-polyprenyl)benzene-1,4-diol + S-adenosyl-L-homocysteine + H(+). Its pathway is quinol/quinone metabolism; menaquinone biosynthesis; menaquinol from 1,4-dihydroxy-2-naphthoate: step 2/2. It functions in the pathway cofactor biosynthesis; ubiquinone biosynthesis. Functionally, methyltransferase required for the conversion of demethylmenaquinol (DMKH2) to menaquinol (MKH2) and the conversion of 2-polyprenyl-6-methoxy-1,4-benzoquinol (DDMQH2) to 2-polyprenyl-3-methyl-6-methoxy-1,4-benzoquinol (DMQH2). The polypeptide is Ubiquinone/menaquinone biosynthesis C-methyltransferase UbiE (Neisseria meningitidis serogroup B (strain ATCC BAA-335 / MC58)).